We begin with the raw amino-acid sequence, 67 residues long: DNA gyrase inhibitor YacG (67 aa).

Residues C10, C13, C29, and C33 each coordinate Zn(2+). Basic and acidic residues predominate over residues E44 to T57. Residues E44–P67 form a disordered region.

This sequence belongs to the DNA gyrase inhibitor YacG family. As to quaternary structure, interacts with GyrB. Zn(2+) is required as a cofactor.

Inhibits all the catalytic activities of DNA gyrase by preventing its interaction with DNA. Acts by binding directly to the C-terminal domain of GyrB, which probably disrupts DNA binding by the gyrase. The protein is DNA gyrase inhibitor YacG of Cronobacter sakazakii (strain ATCC BAA-894) (Enterobacter sakazakii).